The primary structure comprises 270 residues: ATP synthase subunit a (270 aa).

5 helical membrane passes run 37-57 (NVHI…LWVF), 98-118 (IAPL…MDLV), 143-163 (DVNI…YYSI), 217-237 (VVFI…GALP), and 239-259 (AIFH…LTIV).

The protein belongs to the ATPase A chain family. In terms of assembly, F-type ATPases have 2 components, CF(1) - the catalytic core - and CF(0) - the membrane proton channel. CF(1) has five subunits: alpha(3), beta(3), gamma(1), delta(1), epsilon(1). CF(0) has three main subunits: a(1), b(2) and c(9-12). The alpha and beta chains form an alternating ring which encloses part of the gamma chain. CF(1) is attached to CF(0) by a central stalk formed by the gamma and epsilon chains, while a peripheral stalk is formed by the delta and b chains.

The protein resides in the cell inner membrane. Functionally, key component of the proton channel; it plays a direct role in the translocation of protons across the membrane. This chain is ATP synthase subunit a, found in Aliivibrio fischeri (strain ATCC 700601 / ES114) (Vibrio fischeri).